Here is a 199-residue protein sequence, read N- to C-terminus: Protein ZNRD2 (199 aa).

N-acetylalanine is present on Ala-2. The Zn(2+) site is built by Cys-53, Cys-56, Cys-70, and Cys-73. A Phosphoserine modification is found at Ser-94. The interval 100 to 125 (QLASASELPLGSRPAPQPPVPRPEHC) is disordered. The short motif at 173 to 194 (SLETSIQLCGLIRACAEALRSL) is the Nuclear export signal element.

As to quaternary structure, homodimer. Zn(2+) serves as cofactor.

The protein localises to the cytoplasm. Might play a role in mitosis. Antigenic molecule. Could be a centromere-associated protein. May induce anti-centromere antibodies. This is Protein ZNRD2 from Homo sapiens (Human).